We begin with the raw amino-acid sequence, 323 residues long: Methenyltetrahydromethanopterin cyclohydrolase (323 aa).

It belongs to the MCH family.

Its subcellular location is the cytoplasm. It catalyses the reaction 5,10-methenyl-5,6,7,8-tetrahydromethanopterin + H2O = N(5)-formyl-5,6,7,8-tetrahydromethanopterin + H(+). The protein operates within one-carbon metabolism; methanogenesis from CO(2); 5,10-methenyl-5,6,7,8-tetrahydromethanopterin from CO(2): step 3/3. Its function is as follows. Catalyzes the reversible interconversion of 5-formyl-H(4)MPT to methenyl-H(4)MPT(+). This Methanococcus maripaludis (strain C7 / ATCC BAA-1331) protein is Methenyltetrahydromethanopterin cyclohydrolase.